The sequence spans 408 residues: Snake venom 5'-nucleotidase (408 aa).

Residues histidine 54 and histidine 77 each contribute to the Zn(2+) site. Residues asparagine 167 and asparagine 181 are each glycosylated (N-linked (GlcNAc...) asparagine). Cystine bridges form between cysteine 187-cysteine 192 and cysteine 199-cysteine 221. Residue arginine 188 coordinates AMP. AMP-binding residues include asparagine 224, arginine 229, and phenylalanine 252. Cysteine 311 and cysteine 314 are oxidised to a cystine. Residues phenylalanine 335 and aspartate 341 each coordinate AMP. 2 consecutive propeptides (removed in mature form) follow at residues 385-388 (DGTL) and 385-408 (DGTL…FFIL).

It belongs to the 5'-nucleotidase family. Homodimer. In terms of processing, venom 5'-nucleotidases (or a part thereof) may be released into the venom via exosome-like vesicles. They may be attached via a GPI anchor to the membrane of these vesicles. Soluble forms of 5'-nucleotidase might be released by cleavage of the ectodomain in the exosome-like vesicles or venom gland cells. In terms of tissue distribution, expressed by the venom gland.

It localises to the membrane. The catalysed reaction is a ribonucleoside 5'-phosphate + H2O = a ribonucleoside + phosphate. It carries out the reaction AMP + H2O = adenosine + phosphate. The enzyme catalyses GMP + H2O = guanosine + phosphate. It catalyses the reaction ADP + H2O = AMP + phosphate + H(+). With respect to regulation, is potently inhibited by metal ions Fe(3+), Cu(2+) and Zn(2+). Is enhanced by Mn(2+). Ca(2+) and Mg(2+) have no effect. In terms of biological role, hydrolyzes nucleotides into nucleosides. Prefers AMP as the substrate but also cleaves GMP and ADP. Does not affect AMP, cAMP and cGMP. Inhibits ADP- and collagen-induced platelet aggregation. Snake venom 5'-nucleotidases are widely distributed among venomous snake taxa, but there is a lack of information about their biological activities. They have been shown to inhibit platelet aggregation. This effect may be due to the liberation of inhibitory AMP or adenosine by its action on ADP released upon initiation of aggregation. Venom 5'-nucleotidases are also known to synergistically act in vivo with other toxins like ADPases, phospholipases, and disintegrins to exert a more pronounced anti-coagulant effect. This Macrovipera lebetinus (Levantine viper) protein is Snake venom 5'-nucleotidase.